Consider the following 416-residue polypeptide: Lysosome-associated membrane glycoprotein 3 (416 aa).

A signal peptide spans 1 to 27; it reads MPRQLSAAAALFASLAVILHDGSQMRA. Topologically, residues 28 to 381 are lumenal; the sequence is KAFPETRDYS…NVDECSSDYT (354 aa). 7 N-linked (GlcNAc...) asparagine glycosylation sites follow: Asn112, Asn158, Asn164, Asn200, Asn232, Asn266, and Asn291. 2 disordered regions span residues 136 to 167 and 179 to 219; these read PTITPPAHTTGTSSSTVSHTTGNTTQPSNQTT and STTG…LAPQ. Positions 143–160 are enriched in low complexity; sequence HTTGTSSSTVSHTTGNTT. Residues 188 to 208 are compositionally biased toward low complexity; the sequence is PTHAPGTTAAAHNTTRTAAPA. Cys237 and Cys274 form a disulfide bridge. Cys339 and Cys376 are oxidised to a cystine. The helical transmembrane segment at 382–402 threads the bilayer; that stretch reads IVLPVIGAIVVGLCLMGMGVY. Topologically, residues 403-416 are cytoplasmic; it reads KIRLRCQSSGYQRI.

It belongs to the LAMP family. Monomer. Interacts with FURIN. In terms of assembly, (Microbial infection) Interacts with mumps virus protein F; this interaction promotes protein F cleavage by FURIN. In terms of tissue distribution, detected in tonsil interdigitating dendritic cells, in spleen, lymph node, Peyer's patches in the small instestine, in thymus medulla and in B-cells (at protein level). Expressed in lymphoid organs and dendritic cells. Expressed in lung. Up-regulated in carcinomas of the esophagus, colon, rectum, ureter, stomach, breast, fallopian tube, thyroid and parotid tissues.

Its subcellular location is the cell surface. It is found in the lysosome membrane. It localises to the cytoplasmic vesicle membrane. The protein resides in the early endosome membrane. Functionally, lysosomal membrane glycoprotein which plays a role in the unfolded protein response (UPR) that contributes to protein degradation and cell survival during proteasomal dysfunction. Plays a role in the process of fusion of the lysosome with the autophagosome, thereby modulating the autophagic process. Promotes hepatocellular lipogenesis through activation of the PI3K/Akt pathway. May also play a role in dendritic cell function and in adaptive immunity. Its function is as follows. (Microbial infection) Plays a positive role in post-entry steps of influenza A virus replication, either virus uncoating, cytosolic transport, or nuclear import of viral components, and promotes nuclear accumulation of influenza nucleoprotein/NP at early stages of viral infection. In terms of biological role, (Microbial infection) Supports the FURIN-mediated cleavage of mumps virus fusion protein F by interacting with both FURIN and the unprocessed form but not the processed form of the viral protein F. (Microbial infection) Promotes the intracellular proliferation of Salmonella typhimuium. The protein is Lysosome-associated membrane glycoprotein 3 (LAMP3) of Homo sapiens (Human).